The chain runs to 273 residues: Ribosomal RNA small subunit methyltransferase I (273 aa).

It belongs to the methyltransferase superfamily. RsmI family.

It localises to the cytoplasm. The catalysed reaction is cytidine(1402) in 16S rRNA + S-adenosyl-L-methionine = 2'-O-methylcytidine(1402) in 16S rRNA + S-adenosyl-L-homocysteine + H(+). In terms of biological role, catalyzes the 2'-O-methylation of the ribose of cytidine 1402 (C1402) in 16S rRNA. The chain is Ribosomal RNA small subunit methyltransferase I from Xylella fastidiosa (strain 9a5c).